A 117-amino-acid chain; its full sequence is Large ribosomal subunit protein uL18 (117 aa).

Belongs to the universal ribosomal protein uL18 family. In terms of assembly, part of the 50S ribosomal subunit; part of the 5S rRNA/L5/L18/L25 subcomplex. Contacts the 5S and 23S rRNAs.

Its function is as follows. This is one of the proteins that bind and probably mediate the attachment of the 5S RNA into the large ribosomal subunit, where it forms part of the central protuberance. The chain is Large ribosomal subunit protein uL18 from Methylococcus capsulatus (strain ATCC 33009 / NCIMB 11132 / Bath).